The sequence spans 318 residues: ATP phosphoribosyltransferase regulatory subunit (318 aa).

This sequence belongs to the class-II aminoacyl-tRNA synthetase family. HisZ subfamily. Heteromultimer composed of HisG and HisZ subunits.

It localises to the cytoplasm. The protein operates within amino-acid biosynthesis; L-histidine biosynthesis; L-histidine from 5-phospho-alpha-D-ribose 1-diphosphate: step 1/9. Its function is as follows. Required for the first step of histidine biosynthesis. May allow the feedback regulation of ATP phosphoribosyltransferase activity by histidine. This Lactococcus lactis subsp. cremoris (strain MG1363) protein is ATP phosphoribosyltransferase regulatory subunit.